We begin with the raw amino-acid sequence, 594 residues long: Aspartate--tRNA(Asp/Asn) ligase (594 aa).

Residue Glu175 participates in L-aspartate binding. An aspartate region spans residues 199–202 (QLFK). L-aspartate is bound at residue Arg221. ATP contacts are provided by residues 221 to 223 (RDE) and Gln230. His446 lines the L-aspartate pocket. Position 492 (Glu492) interacts with ATP. Residue Arg499 coordinates L-aspartate. 544 to 547 (GFDR) is an ATP binding site.

This sequence belongs to the class-II aminoacyl-tRNA synthetase family. Type 1 subfamily. In terms of assembly, homodimer.

The protein resides in the cytoplasm. The catalysed reaction is tRNA(Asx) + L-aspartate + ATP = L-aspartyl-tRNA(Asx) + AMP + diphosphate. In terms of biological role, aspartyl-tRNA synthetase with relaxed tRNA specificity since it is able to aspartylate not only its cognate tRNA(Asp) but also tRNA(Asn). Reaction proceeds in two steps: L-aspartate is first activated by ATP to form Asp-AMP and then transferred to the acceptor end of tRNA(Asp/Asn). The polypeptide is Aspartate--tRNA(Asp/Asn) ligase (Hydrogenobaculum sp. (strain Y04AAS1)).